The sequence spans 167 residues: UPF0254 protein MJ1251 (167 aa).

The protein belongs to the UPF0254 family.

The polypeptide is UPF0254 protein MJ1251 (Methanocaldococcus jannaschii (strain ATCC 43067 / DSM 2661 / JAL-1 / JCM 10045 / NBRC 100440) (Methanococcus jannaschii)).